The primary structure comprises 361 residues: Peptidyl-prolyl cis-trans isomerase CYP40 (361 aa).

The PPIase cyclophilin-type domain occupies 7 to 172 (FMDISIGGEL…QDVVIHDCGE (166 aa)). TPR repeat units lie at residues 212–245 (VDFVKAHGNEHFKKQDYKMALRKYRKALRYLDIC) and 298–331 (VKALFRQGQAYMALNNVDAAAESLEKALQFEPND).

This sequence belongs to the cyclophilin-type PPIase family. Expressed at low levels in seedlings, roots, shoots, leaves, stems, inflorescences, flowers and siliques, with highest levels dividing tissues.

It is found in the cytoplasm. The catalysed reaction is [protein]-peptidylproline (omega=180) = [protein]-peptidylproline (omega=0). With respect to regulation, binds cyclosporin A (CsA). CsA mediates some of its effects via an inhibitory action on PPIase. PPIases accelerate the folding of proteins. It catalyzes the cis-trans isomerization of proline imidic peptide bonds in oligopeptides. Involved in promoting the expression of the juvenile phase of vegetative development, and, to a lower extent, in regulating the positioning of floral buds, floral morphogenesis and the expression of HSPs. Collaboratively with RBL and ULT1, influences floral meristem (FM) determinacy in an AGAMOUS and SUPERMAN-dependent manner, thus contributing to the floral developmental homeostasis. The polypeptide is Peptidyl-prolyl cis-trans isomerase CYP40 (Arabidopsis thaliana (Mouse-ear cress)).